Here is an 891-residue protein sequence, read N- to C-terminus: Alanine--tRNA ligase (891 aa).

Residues H569, H573, C671, and H675 each contribute to the Zn(2+) site.

Belongs to the class-II aminoacyl-tRNA synthetase family. In terms of assembly, homotetramer. It depends on Zn(2+) as a cofactor.

The protein resides in the cytoplasm. It carries out the reaction tRNA(Ala) + L-alanine + ATP = L-alanyl-tRNA(Ala) + AMP + diphosphate. Catalyzes the attachment of alanine to tRNA(Ala) in a two-step reaction: alanine is first activated by ATP to form Ala-AMP and then transferred to the acceptor end of tRNA(Ala). Also edits incorrectly charged Ser-tRNA(Ala) and Gly-tRNA(Ala) via its editing domain. The polypeptide is Alanine--tRNA ligase (Blochmanniella floridana).